Here is a 177-residue protein sequence, read N- to C-terminus: Isopentenyl-diphosphate Delta-isomerase (177 aa).

His-22 and His-28 together coordinate Mn(2+). The Nudix hydrolase domain occupies 26–160 (LRHMAISVFV…PERFTPWLRI (135 aa)). Cys-62 is an active-site residue. Residue His-64 coordinates Mn(2+). Mg(2+) is bound at residue Glu-82. Mn(2+) is bound by residues Glu-108 and Glu-110. The active site involves Glu-110.

Belongs to the IPP isomerase type 1 family. Requires Mg(2+) as cofactor. It depends on Mn(2+) as a cofactor.

Its subcellular location is the cytoplasm. It carries out the reaction isopentenyl diphosphate = dimethylallyl diphosphate. It functions in the pathway isoprenoid biosynthesis; dimethylallyl diphosphate biosynthesis; dimethylallyl diphosphate from isopentenyl diphosphate: step 1/1. The protein operates within porphyrin-containing compound metabolism; chlorophyll biosynthesis. Catalyzes the 1,3-allylic rearrangement of the homoallylic substrate isopentenyl (IPP) to its highly electrophilic allylic isomer, dimethylallyl diphosphate (DMAPP). This Cereibacter sphaeroides (strain KD131 / KCTC 12085) (Rhodobacter sphaeroides) protein is Isopentenyl-diphosphate Delta-isomerase.